The primary structure comprises 589 residues: Aspartate--tRNA(Asp/Asn) ligase (589 aa).

Residue E170 participates in L-aspartate binding. Residues 194–197 (QLFK) are aspartate. Position 216 (R216) interacts with L-aspartate. ATP is bound by residues 216-218 (RDE) and Q225. H448 contributes to the L-aspartate binding site. E482 is a binding site for ATP. An L-aspartate-binding site is contributed by R489. Position 534–537 (534–537 (GWDR)) interacts with ATP. A disordered region spans residues 563-589 (PLTDAPASITAQQRKESGIDTKPKEVE). Positions 575 to 589 (QRKESGIDTKPKEVE) are enriched in basic and acidic residues.

It belongs to the class-II aminoacyl-tRNA synthetase family. Type 1 subfamily. As to quaternary structure, homodimer.

The protein resides in the cytoplasm. It carries out the reaction tRNA(Asx) + L-aspartate + ATP = L-aspartyl-tRNA(Asx) + AMP + diphosphate. Its function is as follows. Aspartyl-tRNA synthetase with relaxed tRNA specificity since it is able to aspartylate not only its cognate tRNA(Asp) but also tRNA(Asn). Reaction proceeds in two steps: L-aspartate is first activated by ATP to form Asp-AMP and then transferred to the acceptor end of tRNA(Asp/Asn). This Mycobacterium leprae (strain Br4923) protein is Aspartate--tRNA(Asp/Asn) ligase.